The chain runs to 429 residues: CBL-interacting serine/threonine-protein kinase 7 (429 aa).

The Protein kinase domain maps to 25 to 280 (YELGRRLGSG…IETVMKTNWF (256 aa)). ATP is bound by residues 31-39 (LGSGSFAKV) and Lys-54. Asp-149 serves as the catalytic Proton acceptor. The segment at 167–195 (DFGLSALPEHLQNGLLHTACGTPAYTAPE) is activation loop. The residue at position 171 (Ser-171) is a Phosphoserine. A Phosphothreonine modification is found at Thr-184. Residues 302 to 326 (SSVNSITAFDLISLSSGLDLSGLFE) enclose the NAF domain. The interval 330 to 363 (KKERRFTAKVSGVEVEEKAKMIGEKLGYVVKKKM) is PPI.

The protein belongs to the protein kinase superfamily. CAMK Ser/Thr protein kinase family. SNF1 subfamily. As to quaternary structure, interacts with CBL1, CBL2 and CBL3. It depends on Mn(2+) as a cofactor. Autophosphorylated. In terms of tissue distribution, strongly expressed in leaves, but barely expressed in roots, stems or flowers.

It catalyses the reaction L-seryl-[protein] + ATP = O-phospho-L-seryl-[protein] + ADP + H(+). The enzyme catalyses L-threonyl-[protein] + ATP = O-phospho-L-threonyl-[protein] + ADP + H(+). CIPK serine-threonine protein kinases interact with CBL proteins. Binding of a CBL protein to the regulatory NAF domain of CIPK protein lead to the activation of the kinase in a calcium-dependent manner. Phosphorylates the rice sucrose synthase (SuSy) in vitro in an allosteric manner. Involved in cold response. This chain is CBL-interacting serine/threonine-protein kinase 7 (CIPK7), found in Arabidopsis thaliana (Mouse-ear cress).